We begin with the raw amino-acid sequence, 409 residues long: tRNA(Met) cytidine acetate ligase (409 aa).

ATP-binding positions include 7 to 20, glycine 102, asparagine 169, and arginine 194; that span reads VVEY…HLHH.

The protein belongs to the TmcAL family.

It is found in the cytoplasm. The catalysed reaction is cytidine(34) in elongator tRNA(Met) + acetate + ATP = N(4)-acetylcytidine(34) in elongator tRNA(Met) + AMP + diphosphate. Its function is as follows. Catalyzes the formation of N(4)-acetylcytidine (ac(4)C) at the wobble position of elongator tRNA(Met), using acetate and ATP as substrates. First activates an acetate ion to form acetyladenylate (Ac-AMP) and then transfers the acetyl group to tRNA to form ac(4)C34. In Clostridium botulinum (strain Loch Maree / Type A3), this protein is tRNA(Met) cytidine acetate ligase.